We begin with the raw amino-acid sequence, 185 residues long: Photosystem I assembly protein Ycf4 (185 aa).

A run of 2 helical transmembrane segments spans residues 20-40 (GNFFWACILFLGSLGFLAVGA) and 57-77 (ILFFPQGVVMSFYGIAGLFIS).

Belongs to the Ycf4 family.

It is found in the plastid. The protein localises to the chloroplast thylakoid membrane. Functionally, seems to be required for the assembly of the photosystem I complex. The protein is Photosystem I assembly protein Ycf4 of Sorghum bicolor (Sorghum).